The sequence spans 807 residues: Ribosome biogenesis protein ERB1 (807 aa).

The interval 1 to 112 (MMAKNNKTTE…DTTSLTDRLS (112 aa)) is disordered. Acidic residues-rich tracts occupy residues 21–30 (EESDVEEDED) and 42–56 (EASE…YESA). A Phosphoserine modification is found at S23. The span at 57–69 (VEEKESSSDKEAQ) shows a compositional bias: basic and acidic residues. Phosphoserine is present on residues S72 and S76. Residues 86–102 (EEEGDEEEDYDSSEFSD) are compositionally biased toward acidic residues. K127 is covalently cross-linked (Glycyl lysine isopeptide (Lys-Gly) (interchain with G-Cter in ubiquitin)). A phosphoserine mark is found at S146 and S149. A required for interaction with NOP7 region spans residues 265 to 383 (RFVPSKNEAK…LRKVPGYGES (119 aa)). The interval 383-419 (SIRERFERSLDLYLAPRVRKNKLNIDPNSLIPELPSP) is required for interaction with YTM1. S418 is subject to Phosphoserine. 7 WD repeats span residues 435 to 474 (GHKG…EVYR), 483 to 523 (NPDD…YDIE), 592 to 634 (SCKK…TQSP), 637 to 675 (KSKG…LVKK), 678 to 717 (PGAR…TPYK), 721 to 760 (YHEK…DMMK), and 776 to 807 (INSL…LWTT).

It belongs to the WD repeat BOP1/ERB1 family. Component of the NOP7 complex, composed of ERB1, NOP7 and YTM1. The complex is held together by ERB1, which interacts with NOP7 via its N-terminal domain and with YTM1 via a high-affinity interaction between the seven-bladed beta-propeller domains of the 2 proteins. The NOP7 complex associates with the 66S pre-ribosome.

The protein localises to the nucleus. It localises to the nucleolus. The protein resides in the nucleoplasm. Component of the NOP7 complex, which is required for maturation of the 25S and 5.8S ribosomal RNAs and formation of the 60S ribosome. The chain is Ribosome biogenesis protein ERB1 from Saccharomyces cerevisiae (strain YJM789) (Baker's yeast).